Here is a 155-residue protein sequence, read N- to C-terminus: Ribosomal RNA large subunit methyltransferase H (155 aa).

Residues L72, G103, and 122 to 127 (LSPLTL) contribute to the S-adenosyl-L-methionine site.

It belongs to the RNA methyltransferase RlmH family. As to quaternary structure, homodimer.

The protein resides in the cytoplasm. The catalysed reaction is pseudouridine(1915) in 23S rRNA + S-adenosyl-L-methionine = N(3)-methylpseudouridine(1915) in 23S rRNA + S-adenosyl-L-homocysteine + H(+). Its function is as follows. Specifically methylates the pseudouridine at position 1915 (m3Psi1915) in 23S rRNA. The sequence is that of Ribosomal RNA large subunit methyltransferase H from Haemophilus influenzae (strain PittEE).